The primary structure comprises 59 residues: Thrombostatin (59 aa).

4 disulfide bridges follow: C3/C22, C17/C37, C39/C51, and C52/C57. The Cell attachment site signature appears at 43 to 45 (RGD).

The protein belongs to the three-finger toxin family. Short-chain subfamily. Antiplatelet toxin sub-subfamily. Expressed by the venom gland.

The protein resides in the secreted. Inhibits ADP-induced platelet aggregation and inhibits the binding of purified platelet fibrinogen receptor alpha-IIb/beta-3 (ITGA2B/ITGB3) to immobilized fibrinogen. In Dendroaspis angusticeps (Eastern green mamba), this protein is Thrombostatin.